The primary structure comprises 119 residues: RKLAFRYRRVKEIYNTYKNNVGGLLGPAKREAWLQLRAEIEALTDSWLTLALKALTLIHSRTNCVNILVTTTQLIPALAKVLLYGLGVVFPIENIYSATKIGKESCFERIIQRFGRKVV.

This sequence belongs to the HAD-like hydrolase superfamily. EYA family. Mg(2+) serves as cofactor.

It localises to the cytoplasm. It is found in the nucleus. It carries out the reaction O-phospho-L-tyrosyl-[protein] + H2O = L-tyrosyl-[protein] + phosphate. The catalysed reaction is O-phospho-L-seryl-[protein] + H2O = L-seryl-[protein] + phosphate. The enzyme catalyses O-phospho-L-threonyl-[protein] + H2O = L-threonyl-[protein] + phosphate. Functionally, functions both as protein phosphatase and as transcriptional coactivator for SIX1, and probably also for other transcription factors of this family. Tyrosine phosphatase that dephosphorylates 'Tyr-142' of histone H2AX (H2AXY142ph) and promotes efficient DNA repair via the recruitment of DNA repair complexes containing MDC1. 'Tyr-142' phosphorylation of histone H2AX plays a central role in DNA repair and acts as a mark that distinguishes between apoptotic and repair responses to genotoxic stress. Its function as histone phosphatase may contribute to its function in transcription regulation during organogenesis. Also has phosphatase activity with proteins phosphorylated on Ser and Thr residues (in vitro). Required for normal embryonic development of the skeleton, kidneys and ears. This Gallus gallus (Chicken) protein is Protein phosphatase EYA1 (EYA1).